The chain runs to 482 residues: Ribulose bisphosphate carboxylase large chain (482 aa).

A propeptide spanning residues 1–2 (MS) is cleaved from the precursor. Proline 3 is subject to N-acetylproline. The residue at position 14 (lysine 14) is an N6,N6,N6-trimethyllysine. Residues asparagine 123 and threonine 173 each contribute to the substrate site. Lysine 175 acts as the Proton acceptor in catalysis. Lysine 177 is a binding site for substrate. Mg(2+) contacts are provided by lysine 201, aspartate 203, and glutamate 204. Lysine 201 is subject to N6-carboxylysine. Histidine 294 serves as the catalytic Proton acceptor. Substrate is bound by residues arginine 295, histidine 327, and serine 379.

The protein belongs to the RuBisCO large chain family. Type I subfamily. Heterohexadecamer of 8 large chains and 8 small chains; disulfide-linked. The disulfide link is formed within the large subunit homodimers. It depends on Mg(2+) as a cofactor. In terms of processing, the disulfide bond which can form in the large chain dimeric partners within the hexadecamer appears to be associated with oxidative stress and protein turnover.

The protein resides in the plastid. Its subcellular location is the chloroplast. It catalyses the reaction 2 (2R)-3-phosphoglycerate + 2 H(+) = D-ribulose 1,5-bisphosphate + CO2 + H2O. The enzyme catalyses D-ribulose 1,5-bisphosphate + O2 = 2-phosphoglycolate + (2R)-3-phosphoglycerate + 2 H(+). Functionally, ruBisCO catalyzes two reactions: the carboxylation of D-ribulose 1,5-bisphosphate, the primary event in carbon dioxide fixation, as well as the oxidative fragmentation of the pentose substrate in the photorespiration process. Both reactions occur simultaneously and in competition at the same active site. The sequence is that of Ribulose bisphosphate carboxylase large chain from Phytolacca americana (American pokeweed).